The primary structure comprises 289 residues: ATP synthase subunit a (289 aa).

6 consecutive transmembrane segments (helical) span residues Ala43–Phe63, Val103–Leu123, Phe160–Ile180, Ile193–Ala213, Val232–Val252, and Ala259–Val279.

The protein belongs to the ATPase A chain family. F-type ATPases have 2 components, CF(1) - the catalytic core - and CF(0) - the membrane proton channel. CF(1) has five subunits: alpha(3), beta(3), gamma(1), delta(1), epsilon(1). CF(0) has three main subunits: a(1), b(2) and c(9-12). The alpha and beta chains form an alternating ring which encloses part of the gamma chain. CF(1) is attached to CF(0) by a central stalk formed by the gamma and epsilon chains, while a peripheral stalk is formed by the delta and b chains.

The protein localises to the cell inner membrane. Its function is as follows. Key component of the proton channel; it plays a direct role in the translocation of protons across the membrane. The chain is ATP synthase subunit a from Pseudomonas putida (strain ATCC 700007 / DSM 6899 / JCM 31910 / BCRC 17059 / LMG 24140 / F1).